The primary structure comprises 154 residues: Lipoprotein signal peptidase (154 aa).

2 helical membrane passes run 55–75 (GHMWFFYLITVIVIGIIIYIM) and 84–104 (LFSISLAFILGGAIGNFIDRI). Residues aspartate 111 and aspartate 129 contribute to the active site. Residues 124-144 (IFNVADAALSVGVVLMLVYVF) form a helical membrane-spanning segment.

This sequence belongs to the peptidase A8 family.

It is found in the cell membrane. The enzyme catalyses Release of signal peptides from bacterial membrane prolipoproteins. Hydrolyzes -Xaa-Yaa-Zaa-|-(S,diacylglyceryl)Cys-, in which Xaa is hydrophobic (preferably Leu), and Yaa (Ala or Ser) and Zaa (Gly or Ala) have small, neutral side chains.. The protein operates within protein modification; lipoprotein biosynthesis (signal peptide cleavage). In terms of biological role, this protein specifically catalyzes the removal of signal peptides from prolipoproteins. The sequence is that of Lipoprotein signal peptidase from Listeria innocua serovar 6a (strain ATCC BAA-680 / CLIP 11262).